Here is a 245-residue protein sequence, read N- to C-terminus: Endogenous retrovirus group K member 5 Env polyprotein (245 aa).

The interval 1 to 245 (MVTPVTWMDN…TLEFGLEIKL (245 aa)) is truncated surface protein.

It belongs to the beta type-B retroviral envelope protein family. HERV class-II K(HML-2) env subfamily. Expressed in lung, placenta, testis, peripheral blood lymphocytes, and teratocarcinoma cell lines.

Its subcellular location is the virion. Retroviral envelope proteins mediate receptor recognition and membrane fusion during early infection. Endogenous envelope proteins may have kept, lost or modified their original function during evolution. The polypeptide is Endogenous retrovirus group K member 5 Env polyprotein (ERVK-5) (Homo sapiens (Human)).